The following is a 605-amino-acid chain: Proline--tRNA ligase (605 aa).

Belongs to the class-II aminoacyl-tRNA synthetase family. ProS type 1 subfamily. As to quaternary structure, homodimer.

Its subcellular location is the cytoplasm. The catalysed reaction is tRNA(Pro) + L-proline + ATP = L-prolyl-tRNA(Pro) + AMP + diphosphate. Its function is as follows. Catalyzes the attachment of proline to tRNA(Pro) in a two-step reaction: proline is first activated by ATP to form Pro-AMP and then transferred to the acceptor end of tRNA(Pro). As ProRS can inadvertently accommodate and process non-cognate amino acids such as alanine and cysteine, to avoid such errors it has two additional distinct editing activities against alanine. One activity is designated as 'pretransfer' editing and involves the tRNA(Pro)-independent hydrolysis of activated Ala-AMP. The other activity is designated 'posttransfer' editing and involves deacylation of mischarged Ala-tRNA(Pro). The misacylated Cys-tRNA(Pro) is not edited by ProRS. This chain is Proline--tRNA ligase, found in Bifidobacterium adolescentis (strain ATCC 15703 / DSM 20083 / NCTC 11814 / E194a).